The sequence spans 245 residues: Probable phosphatase YcdX (245 aa).

Zn(2+)-binding residues include His7, His9, His15, His40, Glu73, His101, His131, Asp192, and His194.

Belongs to the PHP family. Homotrimer. It depends on Zn(2+) as a cofactor.

This is Probable phosphatase YcdX from Escherichia coli O127:H6 (strain E2348/69 / EPEC).